The primary structure comprises 321 residues: Methionyl-tRNA formyltransferase (321 aa).

113-116 (SILP) provides a ligand contact to (6S)-5,6,7,8-tetrahydrofolate.

The protein belongs to the Fmt family.

The catalysed reaction is L-methionyl-tRNA(fMet) + (6R)-10-formyltetrahydrofolate = N-formyl-L-methionyl-tRNA(fMet) + (6S)-5,6,7,8-tetrahydrofolate + H(+). Attaches a formyl group to the free amino group of methionyl-tRNA(fMet). The formyl group appears to play a dual role in the initiator identity of N-formylmethionyl-tRNA by promoting its recognition by IF2 and preventing the misappropriation of this tRNA by the elongation apparatus. This Pseudoalteromonas translucida (strain TAC 125) protein is Methionyl-tRNA formyltransferase.